We begin with the raw amino-acid sequence, 41 residues long: Large ribosomal subunit protein bL36 (41 aa).

This sequence belongs to the bacterial ribosomal protein bL36 family.

The sequence is that of Large ribosomal subunit protein bL36 from Rickettsia africae (strain ESF-5).